The primary structure comprises 153 residues: Endoribonuclease YbeY (153 aa).

3 residues coordinate Zn(2+): His114, His118, and His124.

Belongs to the endoribonuclease YbeY family. Requires Zn(2+) as cofactor.

It is found in the cytoplasm. In terms of biological role, single strand-specific metallo-endoribonuclease involved in late-stage 70S ribosome quality control and in maturation of the 3' terminus of the 16S rRNA. The sequence is that of Endoribonuclease YbeY from Finegoldia magna (strain ATCC 29328 / DSM 20472 / WAL 2508) (Peptostreptococcus magnus).